Reading from the N-terminus, the 400-residue chain is Keratin, type I cytoskeletal 19 (400 aa).

The head stretch occupies residues 1 to 79 (MTSYSYRQSS…TASDGLLAGN (79 aa)). Omega-N-methylarginine is present on R7. S14 and S22 each carry phosphoserine. R24 is modified (asymmetric dimethylarginine; alternate). R24 bears the Omega-N-methylarginine; alternate mark. Residue R32 is modified to Omega-N-methylarginine. S35 and S40 each carry phosphoserine. An omega-N-methylarginine mark is found at R43 and R51. Residues S57 and S72 each carry the phosphoserine modification. Positions 80–115 (EKLTMQNLNDRLASYLDKVRALEAANGELEVKIRDW) are coil 1A. One can recognise an IF rod domain in the interval 80–391 (EKLTMQNLND…SLLEGQEDHY (312 aa)). The tract at residues 116 to 133 (YQKQGPGPSRDYSHYYTT) is linker 1. Residues 134-225 (IQDLRDKILG…KNHEEEISTL (92 aa)) form a coil 1B region. The linker 12 stretch occupies residues 226–248 (RGQVGGQVSVEVDSAPGTDLAKI). A necessary for interaction with PNN region spans residues 244–390 (DLAKILSDMR…RSLLEGQEDH (147 aa)). The interval 249–387 (LSDMRSQYEV…ATYRSLLEGQ (139 aa)) is coil 2. T323 bears the Phosphothreonine mark. The interval 388 to 400 (EDHYSNLSASKVL) is rod-like helical tail. Y391 carries the post-translational modification Phosphotyrosine. A Phosphoserine modification is found at S395.

The protein belongs to the intermediate filament family. As to quaternary structure, heterotetramer of two type I and two type II keratins. Interacts with PNN and the actin-binding domain of DMD.

Its function is as follows. Involved in the organization of myofibers. Together with KRT8, helps to link the contractile apparatus to dystrophin at the costameres of striated muscle. This chain is Keratin, type I cytoskeletal 19, found in Pongo abelii (Sumatran orangutan).